We begin with the raw amino-acid sequence, 211 residues long: Thiamine-phosphate synthase (211 aa).

4-amino-2-methyl-5-(diphosphooxymethyl)pyrimidine is bound by residues 37 to 41 (QLRIK) and Asn69. Mg(2+) contacts are provided by Asp70 and Asp89. A 4-amino-2-methyl-5-(diphosphooxymethyl)pyrimidine-binding site is contributed by Ser108. 134 to 136 (TQT) contacts 2-[(2R,5Z)-2-carboxy-4-methylthiazol-5(2H)-ylidene]ethyl phosphate. Lys137 is a 4-amino-2-methyl-5-(diphosphooxymethyl)pyrimidine binding site. 2-[(2R,5Z)-2-carboxy-4-methylthiazol-5(2H)-ylidene]ethyl phosphate is bound by residues Gly166 and 186 to 187 (VS).

Belongs to the thiamine-phosphate synthase family. Requires Mg(2+) as cofactor.

It catalyses the reaction 2-[(2R,5Z)-2-carboxy-4-methylthiazol-5(2H)-ylidene]ethyl phosphate + 4-amino-2-methyl-5-(diphosphooxymethyl)pyrimidine + 2 H(+) = thiamine phosphate + CO2 + diphosphate. The catalysed reaction is 2-(2-carboxy-4-methylthiazol-5-yl)ethyl phosphate + 4-amino-2-methyl-5-(diphosphooxymethyl)pyrimidine + 2 H(+) = thiamine phosphate + CO2 + diphosphate. It carries out the reaction 4-methyl-5-(2-phosphooxyethyl)-thiazole + 4-amino-2-methyl-5-(diphosphooxymethyl)pyrimidine + H(+) = thiamine phosphate + diphosphate. The protein operates within cofactor biosynthesis; thiamine diphosphate biosynthesis; thiamine phosphate from 4-amino-2-methyl-5-diphosphomethylpyrimidine and 4-methyl-5-(2-phosphoethyl)-thiazole: step 1/1. Condenses 4-methyl-5-(beta-hydroxyethyl)thiazole monophosphate (THZ-P) and 2-methyl-4-amino-5-hydroxymethyl pyrimidine pyrophosphate (HMP-PP) to form thiamine monophosphate (TMP). The chain is Thiamine-phosphate synthase from Salmonella paratyphi A (strain ATCC 9150 / SARB42).